The chain runs to 92 residues: Small ribosomal subunit protein uS19 (92 aa).

The protein belongs to the universal ribosomal protein uS19 family.

Functionally, protein S19 forms a complex with S13 that binds strongly to the 16S ribosomal RNA. This chain is Small ribosomal subunit protein uS19, found in Beijerinckia indica subsp. indica (strain ATCC 9039 / DSM 1715 / NCIMB 8712).